We begin with the raw amino-acid sequence, 491 residues long: Spermatogenesis-defective protein 39 homolog (491 aa).

T21 carries the phosphothreonine modification. A compositionally biased stretch (polar residues) spans K72–T81. The disordered stretch occupies residues K72–P101. The residue at position 115 (T115) is a Phosphothreonine. Phosphoserine occurs at positions 119, 122, and 128. Residues Q121 to R141 are disordered. T130 carries the phosphothreonine modification.

Belongs to the SPE39 family. Interacts with VPS33B. Associates with the homotypic fusion and vacuole protein sorting (HOPS) complex; impaired by VPS33B. Interacts with RAB11A.

Its subcellular location is the cytoplasm. It is found in the cytoplasmic vesicle. The protein localises to the early endosome. It localises to the recycling endosome. The protein resides in the late endosome. In terms of biological role, proposed to be involved in endosomal maturation implicating in part VPS33B. In epithelial cells, the VPS33B:VIPAS39 complex may play a role in the apical RAB11A-dependent recycling pathway and in the maintenance of the apical-basolateral polarity. May play a role in lysosomal trafficking, probably via association with the core HOPS complex in a discrete population of endosomes; the functions seems to be independent of VPS33B. May play a role in vesicular trafficking during spermatogenesis. May be involved in direct or indirect transcriptional regulation of E-cadherin. In Mus musculus (Mouse), this protein is Spermatogenesis-defective protein 39 homolog (Vipas39).